Reading from the N-terminus, the 751-residue chain is Trehalose phosphorylase (751 aa).

A propeptide spanning residues 1–26 is cleaved from the precursor; that stretch reads MSTPHHQFESKSSTAIRRRLSSSVSS. The interval 1 to 28 is disordered; that stretch reads MSTPHHQFESKSSTAIRRRLSSSVSSKQ.

Belongs to the glycosyltransferase group 1 family. Glycosyltransferase 4 subfamily. As to quaternary structure, homodimer. As to expression, expressed in mycelia, stipes and pilei.

It catalyses the reaction alpha,alpha-trehalose + phosphate = alpha-D-glucose + alpha-D-glucose 1-phosphate. Reversibly catalyzes the synthesis and degradation of trehalose from glucose and alpha-D-glucose 1-phosphate. The equilibrium lies in the direction of trehalose synthesis. The polypeptide is Trehalose phosphorylase (Pleurotus sajor-caju (Oyster mushroom)).